Here is a 258-residue protein sequence, read N- to C-terminus: UPF0758 protein Bamb_2548 (258 aa).

Residues 1–43 form a disordered region; the sequence is MLSPCLAAPATECRDPADAPAAPARHTGPARPRKRRPRNWKPH. Residues 31 to 43 show a composition bias toward basic residues; sequence RPRKRRPRNWKPH. Residues 136–258 enclose the MPN domain; the sequence is QIDSPGAVED…TFSFARAGWL (123 aa). H207, H209, and D220 together coordinate Zn(2+). The JAMM motif signature appears at 207–220; that stretch reads HNHPSGAVQPSAED.

This sequence belongs to the UPF0758 family.

This is UPF0758 protein Bamb_2548 from Burkholderia ambifaria (strain ATCC BAA-244 / DSM 16087 / CCUG 44356 / LMG 19182 / AMMD) (Burkholderia cepacia (strain AMMD)).